A 133-amino-acid polypeptide reads, in one-letter code: MAVNDTIGDMLTRIRNANLARHQTTTIPATRMTRSIAQVLKAEGFIRDFEEQGDGVKRHLVVSLKYRGKQRQPIITALKRVSKPGLRVYANSRELPRVLGGIGIAIISTSNGIMTDREARKQGIGGEVLCYVW.

Belongs to the universal ribosomal protein uS8 family. In terms of assembly, part of the 30S ribosomal subunit. Contacts proteins S5 and S12.

Functionally, one of the primary rRNA binding proteins, it binds directly to 16S rRNA central domain where it helps coordinate assembly of the platform of the 30S subunit. This is Small ribosomal subunit protein uS8 from Thermosynechococcus vestitus (strain NIES-2133 / IAM M-273 / BP-1).